Here is a 308-residue protein sequence, read N- to C-terminus: Tyrosine recombinase XerC (308 aa).

Positions 20–101 (SKLHTLIDDF…SVKAFSSWAQ (82 aa)) constitute a Core-binding (CB) domain. The region spanning 122–302 (DLPKILGEQQ…SNKRLLEAFN (181 aa)) is the Tyr recombinase domain. Residues Arg-163, Lys-187, His-254, Arg-257, and His-280 contribute to the active site. Tyr-289 (O-(3'-phospho-DNA)-tyrosine intermediate) is an active-site residue.

The protein belongs to the 'phage' integrase family. XerC subfamily. As to quaternary structure, forms a cyclic heterotetrameric complex composed of two molecules of XerC and two molecules of XerD.

It is found in the cytoplasm. Its function is as follows. Site-specific tyrosine recombinase, which acts by catalyzing the cutting and rejoining of the recombining DNA molecules. The XerC-XerD complex is essential to convert dimers of the bacterial chromosome into monomers to permit their segregation at cell division. It also contributes to the segregational stability of plasmids. The protein is Tyrosine recombinase XerC of Corynebacterium glutamicum (strain ATCC 13032 / DSM 20300 / JCM 1318 / BCRC 11384 / CCUG 27702 / LMG 3730 / NBRC 12168 / NCIMB 10025 / NRRL B-2784 / 534).